A 706-amino-acid polypeptide reads, in one-letter code: Ribosomal RNA large subunit methyltransferase K/L (706 aa).

Residues 43–154 (LLYQSLLWSR…RDMASVALDL (112 aa)) enclose the THUMP domain.

The protein belongs to the methyltransferase superfamily. RlmKL family.

Its subcellular location is the cytoplasm. The enzyme catalyses guanosine(2445) in 23S rRNA + S-adenosyl-L-methionine = N(2)-methylguanosine(2445) in 23S rRNA + S-adenosyl-L-homocysteine + H(+). It carries out the reaction guanosine(2069) in 23S rRNA + S-adenosyl-L-methionine = N(2)-methylguanosine(2069) in 23S rRNA + S-adenosyl-L-homocysteine + H(+). Functionally, specifically methylates the guanine in position 2445 (m2G2445) and the guanine in position 2069 (m7G2069) of 23S rRNA. In Serratia proteamaculans (strain 568), this protein is Ribosomal RNA large subunit methyltransferase K/L.